The sequence spans 274 residues: Photosystem II extrinsic protein O (274 aa).

An N-terminal signal peptide occupies residues 1-28 (MRFRPSIVALLSVCFGLLTFLYSGSAFA).

It belongs to the PsbO family. PSII is composed of 1 copy each of membrane proteins PsbA, PsbB, PsbC, PsbD, PsbE, PsbF, PsbH, PsbI, PsbJ, PsbK, PsbL, PsbM, PsbT, PsbX, PsbY, PsbZ, Psb30/Ycf12, peripheral proteins PsbO, CyanoQ (PsbQ), PsbU, PsbV and a large number of cofactors. It forms dimeric complexes. Contacts PsbQ.

It is found in the cellular thylakoid membrane. One of the extrinsic, lumenal subunits of photosystem II (PSII), which stabilize and protect the oxygen-evolving complex. PSII is a light-driven water plastoquinone oxidoreductase, using light energy to abstract electrons from H(2)O, generating a proton gradient subsequently used for ATP formation. Required for dimerization of PSII and for binding of PsbQ to PSII. In Synechocystis sp. (strain ATCC 27184 / PCC 6803 / Kazusa), this protein is Photosystem II extrinsic protein O.